The chain runs to 118 residues: Cell division protein FtsB (118 aa).

The Cytoplasmic portion of the chain corresponds to 1–3; that stretch reads MRL. A helical transmembrane segment spans residues 4-21; sequence LFLVLLVLLGLIQYPLWL. The Periplasmic portion of the chain corresponds to 22–118; that stretch reads GKGGWFKVWD…PRPPATPPRR (97 aa). The stretch at 28-62 forms a coiled coil; that stretch reads KVWDLQRQVAEQRETNDGLRARNTALEAEVRDLAT. Residues 88 to 118 form a disordered region; that stretch reads LPPGTPLPSGNSTPQASALSKPRPPATPPRR. Residues 95–105 show a composition bias toward polar residues; it reads PSGNSTPQASA. Residues 109 to 118 show a composition bias toward pro residues; the sequence is PRPPATPPRR.

This sequence belongs to the FtsB family. In terms of assembly, part of a complex composed of FtsB, FtsL and FtsQ.

Its subcellular location is the cell inner membrane. In terms of biological role, essential cell division protein. May link together the upstream cell division proteins, which are predominantly cytoplasmic, with the downstream cell division proteins, which are predominantly periplasmic. This chain is Cell division protein FtsB, found in Bordetella parapertussis (strain 12822 / ATCC BAA-587 / NCTC 13253).